The primary structure comprises 258 residues: Venom plasminogen activator GPV-PA (258 aa).

An N-terminal signal peptide occupies residues 1-18 (MVLIRVLANLLILQLSYA). Residues 19–24 (QKSSEL) constitute a propeptide that is removed on maturation. The region spanning 25 to 249 (VFGGRPCNIN…YTDWIQSIIA (225 aa)) is the Peptidase S1 domain. 6 disulfide bridges follow: Cys-31/Cys-163, Cys-50/Cys-66, Cys-98/Cys-256, Cys-142/Cys-210, Cys-174/Cys-189, and Cys-200/Cys-225. A glycan (N-linked (GlcNAc...) asparagine) is linked at Asn-44. Catalysis depends on charge relay system residues His-65 and Asp-110. N-linked (GlcNAc...) asparagine glycosylation is found at Asn-121 and Asn-185. The active-site Charge relay system is Ser-204.

The protein belongs to the peptidase S1 family. Snake venom subfamily. As to quaternary structure, monomer. As to expression, expressed by the venom gland.

Its subcellular location is the secreted. Its function is as follows. Snake venom serine protease that activates plasminogen. The chain is Venom plasminogen activator GPV-PA from Trimeresurus albolabris (White-lipped pit viper).